Reading from the N-terminus, the 638-residue chain is Epithelial sodium channel subunit beta (638 aa).

Residues 1–50 (MPVKKYLLKCLHRLQKGPGYTYKELLVWYCNNTNTHGPKRIICEGPKKKA) are Cytoplasmic-facing. The chain crosses the membrane as a helical span at residues 51 to 71 (MWFLLTLLFACLVCWQWGVFI). At 72–530 (QTYLSWEVSV…GGQFGFWMGG (459 aa)) the chain is on the extracellular side. 9 disulfides stabilise this stretch: Cys98–Cys270, Cys182–Cys187, Cys194–Cys201, Cys247–Cys254, Cys359–Cys446, Cys384–Cys442, Cys388–Cys438, Cys397–Cys424, and Cys399–Cys413. N-linked (GlcNAc...) asparagine glycosylation is found at Asn135 and Asn141. Residues 531-551 (SVLCLIEFGEIIIDFIWITVI) form a helical membrane-spanning segment. The Cytoplasmic portion of the chain corresponds to 552–638 (KLVASCKGLR…MESDSEVEAI (87 aa)). A disordered region spans residues 598–620 (NAEVYPDQQTLPIPGTPPPNYDS). Residues 614–618 (PPPNY) carry the PY motif; recruits WW domain-containing proteins and is thereby required for ubiquitination and inhibition of the channel by NEDD4 and NEDD4L motif. 2 positions are modified to phosphoserine: Ser631 and Ser633.

The protein belongs to the amiloride-sensitive sodium channel (TC 1.A.6) family. SCNN1B subfamily. As to quaternary structure, component of the heterotrimeric epithelial sodium channel (ENaC) composed of an alpha/SCNN1A, a beta/SCNN1B and a gamma/SCNN1G subunit. Interacts with WWP1 (via WW domains). Interacts with WWP2 (via WW domains). Interacts with the full-length immature form of PCSK9 (pro-PCSK9). Interacts (N-glycosylated) with BPIFA1; the interaction is direct and inhibits the proteolytic processing of SCNN1A and SCNN1G and the activation of ENaC. Ubiquitinated. Can be ubiquitinated at multiple sites and undergo monoubiquitination and polyubiquitination. Ubiquitination by NEDD4 or NEDD4L inhibits the ENaC channel through endocytosis, intracellular retention and degradation of its individual subunits. However, some studies could not confirm the ubiquitination of this subunit of the ENaC. In terms of processing, N-glycosylated. N-glycosylation is required for interaction with BPIFA1. Post-translationally, phosphorylated on serine and threonine residues. Aldosterone and insulin increase the basal level of phosphorylation. In terms of tissue distribution, expressed in lung and epididymis. In the caput region of the epididymis, expressed at the luminal and basolateral surfaces of the ducts and in the smooth muscle coat. In the caudal region of the epididymis, expressed along the luminal border but not continuously, in the smooth muscle coat, in the interstitial muscle tissue and in sperm in the caudal lumen.

The protein resides in the apical cell membrane. It localises to the cytoplasmic vesicle membrane. It catalyses the reaction Na(+)(in) = Na(+)(out). With respect to regulation, originally identified and characterized by its inhibition by the diuretic drug amiloride. Functionally, this is one of the three pore-forming subunits of the heterotrimeric epithelial sodium channel (ENaC), a critical regulator of sodium balance and fluid homeostasis. ENaC operates in epithelial tissues, where it mediates the electrodiffusion of sodium ions from extracellular fluid through the apical membrane of cells, with water following osmotically. It plays a key role in maintaining sodium homeostasis through electrogenic sodium reabsorption in the kidneys. This subunit is not essential for ENaC function in airway surface liquid homeostasis and proper mucus clearance. This is Epithelial sodium channel subunit beta from Rattus norvegicus (Rat).